The following is a 301-amino-acid chain: Methionyl-tRNA formyltransferase (301 aa).

109–112 (SLLP) lines the (6S)-5,6,7,8-tetrahydrofolate pocket.

The protein belongs to the Fmt family.

The catalysed reaction is L-methionyl-tRNA(fMet) + (6R)-10-formyltetrahydrofolate = N-formyl-L-methionyl-tRNA(fMet) + (6S)-5,6,7,8-tetrahydrofolate + H(+). Functionally, attaches a formyl group to the free amino group of methionyl-tRNA(fMet). The formyl group appears to play a dual role in the initiator identity of N-formylmethionyl-tRNA by promoting its recognition by IF2 and preventing the misappropriation of this tRNA by the elongation apparatus. This chain is Methionyl-tRNA formyltransferase, found in Ruegeria pomeroyi (strain ATCC 700808 / DSM 15171 / DSS-3) (Silicibacter pomeroyi).